The chain runs to 353 residues: D-alanine--D-alanine ligase (353 aa).

Residues 141–349 form the ATP-grasp domain; sequence KAAFAAAGLP…LEELVSQLVI (209 aa). ATP is bound at residue 176–231; sequence EAKLKYPCFVKPANLGSSVGISKAQNRNELLIGLDKAASLDRRIVVEQGVSARELE. Mg(2+) contacts are provided by aspartate 302, glutamate 316, and asparagine 318.

This sequence belongs to the D-alanine--D-alanine ligase family. The cofactor is Mg(2+). Mn(2+) is required as a cofactor.

Its subcellular location is the cytoplasm. It carries out the reaction 2 D-alanine + ATP = D-alanyl-D-alanine + ADP + phosphate + H(+). It participates in cell wall biogenesis; peptidoglycan biosynthesis. Functionally, cell wall formation. The protein is D-alanine--D-alanine ligase of Prochlorococcus marinus (strain MIT 9313).